The sequence spans 466 residues: Citrate synthase, mitochondrial (466 aa).

Residues 1 to 27 constitute a mitochondrion transit peptide; sequence MALLTAAARLLGTKNASCLVLAARHAS. The short motif at 2–21 is the SIFI-degron element; it reads ALLTAAARLLGTKNASCLVL. Lysine 57 is subject to N6-succinyllysine. An N6-acetyllysine; alternate modification is found at lysine 76. N6-succinyllysine; alternate is present on lysine 76. An N6-succinyllysine mark is found at lysine 103 and lysine 193. Residue histidine 301 is part of the active site. N6-acetyllysine; alternate occurs at positions 321 and 327. N6-succinyllysine; alternate occurs at positions 321 and 327. Residue histidine 347 is part of the active site. Arginine 356 lines the oxaloacetate pocket. Lysine 375 is modified (N6-acetyllysine; alternate). Position 375 is an N6-succinyllysine; alternate (lysine 375). At lysine 382 the chain carries N6-acetyllysine. Position 393 is an N6-acetyllysine; alternate (lysine 393). Residue lysine 393 is modified to N6-succinyllysine; alternate. Lysine 395 carries the N6,N6,N6-trimethyllysine modification. The active site involves aspartate 402. 2 residues coordinate oxaloacetate: arginine 428 and arginine 448. Lysine 450 is subject to N6-succinyllysine. N6-acetyllysine; alternate is present on lysine 459. Lysine 459 bears the N6-succinyllysine; alternate mark.

It belongs to the citrate synthase family. Homodimer. Post-translationally, methylated. Trimethylation at Lys-395 by CSKMT decreases citrate synthase activity. In terms of processing, in response to mitochondrial stress, the precursor protein is ubiquitinated by the SIFI complex in the cytoplasm before mitochondrial import, leading to its degradation. Within the SIFI complex, UBR4 initiates ubiquitin chain that are further elongated or branched by KCMF1.

The protein localises to the mitochondrion matrix. The catalysed reaction is oxaloacetate + acetyl-CoA + H2O = citrate + CoA + H(+). It participates in carbohydrate metabolism; tricarboxylic acid cycle; isocitrate from oxaloacetate: step 1/2. Its function is as follows. Key enzyme of the Krebs tricarboxylic acid cycle which catalyzes the synthesis of citrate from acetyl coenzyme A and oxaloacetate. The sequence is that of Citrate synthase, mitochondrial (CS) from Homo sapiens (Human).